The following is a 163-amino-acid chain: Nucleotide-binding protein PMI0103 (163 aa).

The protein belongs to the YajQ family.

Functionally, nucleotide-binding protein. This chain is Nucleotide-binding protein PMI0103, found in Proteus mirabilis (strain HI4320).